Here is a 217-residue protein sequence, read N- to C-terminus: Large ribosomal subunit protein uL3 (217 aa).

Positions 137–160 (VSASHGSHRNHRKPGSIGASSTPS) are disordered.

The protein belongs to the universal ribosomal protein uL3 family. As to quaternary structure, part of the 50S ribosomal subunit. Forms a cluster with proteins L14 and L19.

Its function is as follows. One of the primary rRNA binding proteins, it binds directly near the 3'-end of the 23S rRNA, where it nucleates assembly of the 50S subunit. The sequence is that of Large ribosomal subunit protein uL3 from Clavibacter sepedonicus (Clavibacter michiganensis subsp. sepedonicus).